Reading from the N-terminus, the 266-residue chain is Enterotoxin type C-3 (266 aa).

The signal sequence occupies residues methionine 1–alanine 27. Zn(2+)-binding residues include aspartate 36 and aspartate 110. Residues cysteine 120 and cysteine 137 are joined by a disulfide bond. Zn(2+)-binding residues include histidine 145 and histidine 149.

This sequence belongs to the staphylococcal/streptococcal toxin family. Interacts with MHC class II molecules composed of alpha/HLA-DRA and beta/HLA-DRB1 chains. Interacts with host T-cell receptor/TCR beta variable chain TRBV8-2.

The protein localises to the secreted. Functionally, staphylococcal enterotoxin that activates the host immune system by binding as unprocessed molecules to major histocompatibility (MHC) complex class II and T-cell receptor (TCR) molecules. In turn, this ternary complex activates a large number of T-lymphocytes initiating a systemic release of pro-inflammatory cytokines. Also causes the intoxication staphylococcal food poisoning syndrome. This Staphylococcus aureus protein is Enterotoxin type C-3 (entC3).